A 228-amino-acid chain; its full sequence is Phosphoglycolate phosphatase 1 (228 aa).

D8 functions as the Nucleophile in the catalytic mechanism. Residues D8 and D10 each contribute to the Mg(2+) site. A substrate-binding site is contributed by K149. The Mg(2+) site is built by D172 and D176.

The protein belongs to the archaeal SPP-like hydrolase family. Mg(2+) is required as a cofactor.

It catalyses the reaction 2-phosphoglycolate + H2O = glycolate + phosphate. Functionally, catalyzes the dephosphorylation of 2-phosphoglycolate. This Saccharolobus solfataricus (strain ATCC 35092 / DSM 1617 / JCM 11322 / P2) (Sulfolobus solfataricus) protein is Phosphoglycolate phosphatase 1.